The following is a 183-amino-acid chain: Hypoxanthine-guanine phosphoribosyltransferase (183 aa).

Positions 47 and 48 each coordinate diphosphate. Glu103 and Asp104 together coordinate Mg(2+). The active-site Proton acceptor is the Asp107. Residues Lys134, 155–156 (FV), and Asp162 contribute to the GMP site. Diphosphate is bound at residue Arg168.

This sequence belongs to the purine/pyrimidine phosphoribosyltransferase family. Mg(2+) is required as a cofactor.

Its subcellular location is the cytoplasm. The catalysed reaction is IMP + diphosphate = hypoxanthine + 5-phospho-alpha-D-ribose 1-diphosphate. The enzyme catalyses GMP + diphosphate = guanine + 5-phospho-alpha-D-ribose 1-diphosphate. It participates in purine metabolism; IMP biosynthesis via salvage pathway; IMP from hypoxanthine: step 1/1. It functions in the pathway purine metabolism; GMP biosynthesis via salvage pathway; GMP from guanine: step 1/1. Functionally, purine salvage pathway enzyme that catalyzes the transfer of the ribosyl-5-phosphate group from 5-phospho-alpha-D-ribose 1-diphosphate (PRPP) to the N9 position of the 6-oxopurines hypoxanthine and guanine to form the corresponding ribonucleotides IMP (inosine 5'-monophosphate) and GMP (guanosine 5'-monophosphate), with the release of PPi. The chain is Hypoxanthine-guanine phosphoribosyltransferase (hpt) from Lactococcus lactis subsp. lactis (strain IL1403) (Streptococcus lactis).